The chain runs to 434 residues: Beta-enolase (434 aa).

Position 2 is an N-acetylserine (serine 2). Histidine 158 and glutamate 167 together coordinate substrate. Glutamate 210 acts as the Proton donor in catalysis. The Mg(2+) site is built by aspartate 245, glutamate 293, and aspartate 318. Residues glutamate 293 and aspartate 318 each contribute to the substrate site. Lysine 343 acts as the Proton acceptor in catalysis. Residues serine 370 to serine 373 and lysine 394 each bind substrate.

Belongs to the enolase family. As to quaternary structure, homodimer. Interacts with PNKD. Mg(2+) is required as a cofactor.

It is found in the cytoplasm. The enzyme catalyses (2R)-2-phosphoglycerate = phosphoenolpyruvate + H2O. It participates in carbohydrate degradation; glycolysis; pyruvate from D-glyceraldehyde 3-phosphate: step 4/5. Glycolytic enzyme that catalyzes the conversion of 2-phosphoglycerate to phosphoenolpyruvate. The protein is Beta-enolase (ENO3) of Gallus gallus (Chicken).